The primary structure comprises 445 residues: Phosphoglucosamine mutase (445 aa).

Catalysis depends on S102, which acts as the Phosphoserine intermediate. Residues S102, D241, D243, and D245 each coordinate Mg(2+). At S102 the chain carries Phosphoserine.

It belongs to the phosphohexose mutase family. Mg(2+) is required as a cofactor. Activated by phosphorylation.

The catalysed reaction is alpha-D-glucosamine 1-phosphate = D-glucosamine 6-phosphate. Its function is as follows. Catalyzes the conversion of glucosamine-6-phosphate to glucosamine-1-phosphate. This Haemophilus influenzae (strain ATCC 51907 / DSM 11121 / KW20 / Rd) protein is Phosphoglucosamine mutase.